Here is a 1848-residue protein sequence, read N- to C-terminus: WD repeat-containing protein 90 (1848 aa).

Residues Met1–Phe222 are binds with microtubules. 2 disordered regions span residues Met257 to Thr278 and Ser316 to Gln336. Positions Arg320–Glu335 are enriched in basic and acidic residues. 10 WD repeats span residues Gly436 to Lys479, His481 to Glu523, Ala530 to Cys570, Ser644 to Glu683, Glu685 to Leu724, Ser727 to Asp766, Ala769 to Glu808, Gln811 to Leu850, Val955 to Pro993, and Gly998 to Phe1035. Disordered stretches follow at residues Ala1053–Asp1133 and Leu1151–Tyr1178. Over residues Ser1102–Asn1113 the composition is skewed to acidic residues. Basic and acidic residues-rich tracts occupy residues Arg1114 to Leu1129 and Gly1164 to Tyr1178. WD repeat units lie at residues Gly1252 to Ile1297, His1300 to Thr1341, Arg1343 to Gln1382, Gly1395 to Thr1433, Glu1435 to Glu1473, Gly1532 to Gln1571, Val1574 to Lys1621, Pro1624 to Val1663, Ser1670 to Glu1714, Pro1774 to Phe1813, and Ala1815 to Ser1848.

This sequence belongs to the WD repeat WDR90/POC16 family.

It localises to the cytoplasm. The protein resides in the cytoskeleton. It is found in the microtubule organizing center. Its subcellular location is the centrosome. The protein localises to the centriole. It localises to the centriolar satellite. Functionally, microtubule-binding protein that plays a crucial role in ensuring inner core protein localization within the centriole core, as well as in maintaining the microtubule wall integrity and the overall centriole roundness and stability. Required for efficient primary cilium formation. This chain is WD repeat-containing protein 90 (wdr90), found in Xenopus tropicalis (Western clawed frog).